We begin with the raw amino-acid sequence, 390 residues long: Coenzyme A biosynthesis bifunctional protein CoaBC (390 aa).

The segment at 1-188 (MDKNKHILIG…NQKDYLKNKK (188 aa)) is phosphopantothenoylcysteine decarboxylase. C156 (proton donor) is an active-site residue. The phosphopantothenate--cysteine ligase stretch occupies residues 189–390 (ILITASRTEE…VAKEILKILY (202 aa)). Residues D277, K287, 304-307 (PDII), F323, K338, and K342 each bind CTP.

In the N-terminal section; belongs to the HFCD (homo-oligomeric flavin containing Cys decarboxylase) superfamily. The protein in the C-terminal section; belongs to the PPC synthetase family. The cofactor is Mg(2+). Requires FMN as cofactor.

The enzyme catalyses N-[(R)-4-phosphopantothenoyl]-L-cysteine + H(+) = (R)-4'-phosphopantetheine + CO2. It catalyses the reaction (R)-4'-phosphopantothenate + L-cysteine + CTP = N-[(R)-4-phosphopantothenoyl]-L-cysteine + CMP + diphosphate + H(+). Its pathway is cofactor biosynthesis; coenzyme A biosynthesis; CoA from (R)-pantothenate: step 2/5. It functions in the pathway cofactor biosynthesis; coenzyme A biosynthesis; CoA from (R)-pantothenate: step 3/5. Functionally, catalyzes two sequential steps in the biosynthesis of coenzyme A. In the first step cysteine is conjugated to 4'-phosphopantothenate to form 4-phosphopantothenoylcysteine. In the second step the latter compound is decarboxylated to form 4'-phosphopantotheine. The protein is Coenzyme A biosynthesis bifunctional protein CoaBC of Borreliella burgdorferi (strain ATCC 35210 / DSM 4680 / CIP 102532 / B31) (Borrelia burgdorferi).